The chain runs to 443 residues: Tol-Pal system protein TolB (443 aa).

A signal peptide spans 1 to 33 (MKIGIINTKIRTVFSAFACMIAASLVCTMPARA).

This sequence belongs to the TolB family. The Tol-Pal system is composed of five core proteins: the inner membrane proteins TolA, TolQ and TolR, the periplasmic protein TolB and the outer membrane protein Pal. They form a network linking the inner and outer membranes and the peptidoglycan layer.

It is found in the periplasm. Functionally, part of the Tol-Pal system, which plays a role in outer membrane invagination during cell division and is important for maintaining outer membrane integrity. This chain is Tol-Pal system protein TolB, found in Brucella abortus (strain S19).